A 157-amino-acid chain; its full sequence is Large ribosomal subunit protein uL11 (157 aa).

The protein belongs to the universal ribosomal protein uL11 family. In terms of assembly, part of the ribosomal stalk of the 50S ribosomal subunit. Interacts with L10 and the large rRNA to form the base of the stalk. L10 forms an elongated spine to which L12 dimers bind in a sequential fashion forming a multimeric L10(L12)X complex.

Forms part of the ribosomal stalk which helps the ribosome interact with GTP-bound translation factors. This chain is Large ribosomal subunit protein uL11, found in Archaeoglobus fulgidus (strain ATCC 49558 / DSM 4304 / JCM 9628 / NBRC 100126 / VC-16).